Consider the following 337-residue polypeptide: Tetraacyldisaccharide 4'-kinase (337 aa).

55–62 contributes to the ATP binding site; it reads TIGGNGKT.

It belongs to the LpxK family.

The catalysed reaction is a lipid A disaccharide + ATP = a lipid IVA + ADP + H(+). It participates in glycolipid biosynthesis; lipid IV(A) biosynthesis; lipid IV(A) from (3R)-3-hydroxytetradecanoyl-[acyl-carrier-protein] and UDP-N-acetyl-alpha-D-glucosamine: step 6/6. Functionally, transfers the gamma-phosphate of ATP to the 4'-position of a tetraacyldisaccharide 1-phosphate intermediate (termed DS-1-P) to form tetraacyldisaccharide 1,4'-bis-phosphate (lipid IVA). In Blochmanniella pennsylvanica (strain BPEN), this protein is Tetraacyldisaccharide 4'-kinase.